The primary structure comprises 570 residues: Keratin, type I cytoskeletal 10 (570 aa).

Residues 1 to 16 (MSVLYSSSSKQFSSSR) are compositionally biased toward low complexity. The segment at 1–29 (MSVLYSSSSKQFSSSRSGGGGGGGSVRVS) is disordered. Residues 1 to 143 (MSVLYSSSSK…GDGGSLLSGN (143 aa)) are head. S15 and S17 each carry phosphoserine. Asymmetric dimethylarginine; alternate is present on R32. R32 bears the Omega-N-methylarginine; alternate mark. A phosphoserine mark is found at S34, S45, S48, and S168. Residues 144–179 (GRVTMQNLNDRLASYMDKVRALEESNYELEGKIKEW) are coil 1A. The IF rod domain occupies 144-458 (GRVTMQNLND…SLLEGEGSSS (315 aa)). The tract at residues 180–200 (YEKHGNSSQREPRDYSKYYKT) is linker 1. Positions 201–292 (IEDLKGQILT…KNHEEEMRDL (92 aa)) are coil 1B. Residues 293–315 (QNVSTGDVNVEMNAAPGVDLTQL) form a linker 12 region. Residues 316-454 (LNNMRNQYEQ…QTYRSLLEGE (139 aa)) form a coil 2 region. Residues 451-570 (LEGEGSSSGG…GDQSSKGPRY (120 aa)) are disordered. Residues 455–570 (GSSSGGGGGR…GDQSSKGPRY (116 aa)) are tail. Residues 456-562 (SSSGGGGGRR…GGFKSSGGGD (107 aa)) are compositionally biased toward gly residues.

It belongs to the intermediate filament family. (Microbial infection) Interacts (via C-terminal tail domain) with the S.aureus clumping factor, clfB; this interaction probably mediates S.aureus attachment to the highly keratinized squamous epithelial cells from the nasal cavity. In terms of assembly, heterotetramer of two type I and two type II keratins. Heterodimer with KRT1. Two heterodimers of KRT1 and KRT10 form a heterotetramer. The KRT10 subunit in the heterotetramer is probably disulfide-linked. Interacts with PLEC isoform 1C, when in a heterodimer with KRT1. As to quaternary structure, (Microbial infection) Interacts (via the C-terminal tail domain) with S.pneumoniae serine-rich repeat protein PsrP; this interaction probably mediates S.pneumoniae adherence to lung tissue and subsequent pathogenesis. In terms of tissue distribution, expressed in the suprabasal layers of the epidermis throughout the entire sole (at protein level). Expressed in the infundibular regions of the ear, the interscale regions of the tail, and the interfollicular epidermis of the back. Expressed in lung tissue from young mice (at protein level).

The protein localises to the secreted. The protein resides in the extracellular space. Its subcellular location is the cell surface. It is found in the cytoplasm. Its function is as follows. Plays a role in the establishment of the epidermal barrier on plantar skin. Involved in the maintenance of cell layer development and keratin filament bundles in suprabasal cells of the epithelium. (Microbial infection) Acts as a mediator of S.aureus adherence to desquamated nasal epithelial cells via clfB, and hence may play a role in nasal colonization. Functionally, (Microbial infection) Binds S.pneumoniae PsrP, mediating adherence of the bacteria to lung cell lines. The sequence is that of Keratin, type I cytoskeletal 10 (Krt10) from Mus musculus (Mouse).